The primary structure comprises 85 residues: Teretoxin Tan9.6 (85 aa).

Positions 1–21 (MMSKTGALLLTFMILVLFSMA) are cleaved as a signal peptide. Positions 22–52 (AADALGERFEDHEQKIREQDAGVGLLSLMGR) are excised as a propeptide.

Contains 3 disulfide bonds. As to expression, expressed by the venom duct.

It is found in the secreted. This chain is Teretoxin Tan9.6, found in Terebra anilis (Auger snail).